The sequence spans 936 residues: MGNHVPAGFFTQANSLFRKNLTYQKRNIWSNVRLIVIPFYLCVLLVGIQVLFDTQVNNSADNRCGCRCIDKNGDGKCGQKSCGLQYSSQNQAFFCAFPNPPPLLPLLHIPRPETRSSDRDRDSCRQTGSCPVTILLTGNNHSLGTTISRNLLSTSFAMNSSDLFLRNLAYNVLGTTSKADYTNYLDPGILSDLPIFNVQPRCTPDTTTFSFPFRQSPLEFHKEVRCVEGLNLWRNNSIEISNEIFKGYRQGNLEEIINEVAAAYDLMDTDINNFNVTIWYNSTYKGDLRDRRVKYVRVPRSVNLVSNAYLEFLQGSGTKMLFDFVKEMPKQETRLRLEMASLIGPIFFTWVILLLFPVMLTSLVYEKQQHLRIIMKMHGLGDGPYWMITYAYFLAISIVYIICLMIFGSAIGLKFFRFNDYSIQFIFYFLCINLQISIAFLVSSAFSKIETASVAAYLYVFGSGLLGAFLFQFLLEGLSFPRSWIYIMELYPGFSLYRGLYEFSQYAFKRNLNGSGGMKWKDFNDSAMEEIFYIIIVEWFVALIAAYYTDKISSSGIDPFFFLKNQNPFKKSPSPYGLQRQVSAIAIEMEKLDVAHERVKVEQLMLETSTGHAIVCDNLKKVYPCRDGNPQKMAVRGLSLAVPSGECFGMLGPNGAGKTSFINMMTGLMKPTSGAAFVHGLDICKDMDIVYTSIGVCPQHDLLWETLTGREHLLFYGRLKNLKGSDLDQAVEESLKSVNLFRGGVADKPAGKYSGGMKRRLSVAISLIGSPKVVYMDEPSTGLDPASRRSLWTAIKRAKNHTAIILTTHSMEEAEFLCDRLGIFVDGRLQCVGNPKELKARYGGSYVLTMTTPSEHEKDVEMLVQDVSPNAKKIYHIAGTQKFEIPKEEVRISEVFQAVEKAKDNFRVFAWGLADTTLEDVFIKVARTAQASNVFS.

Transmembrane regions (helical) follow at residues 34-54 (LIVI…LFDT), 340-360 (ASLI…PVML), 393-413 (FLAI…AIGL), 422-442 (SIQF…AFLV), 454-474 (VAAY…FQFL), 484-501 (WIYI…RGLY), and 527-547 (AMEE…IAAY). The 238-residue stretch at 614 to 851 (IVCDNLKKVY…YGGSYVLTMT (238 aa)) folds into the ABC transporter domain. 652–659 (GPNGAGKT) lines the ATP pocket.

The protein belongs to the ABC transporter superfamily. ABCA family. CPR flippase (TC 3.A.1.211) subfamily.

Its subcellular location is the membrane. This chain is ABC transporter A family member 5 (ABCA5), found in Arabidopsis thaliana (Mouse-ear cress).